Reading from the N-terminus, the 176-residue chain is MFANARAKRRSRASSPTPARLGGYAPLRVEITEEQRQDINEAFKLFDSDKDNAIDYHELRAAMRALGFNAEKSEVLKILRDFDKTGKGYLQMEDFVRVMTEKIVERDPLEEIKRAFELFDDDETGKISLRNLRRVAKELNENIDDQELEAMIEEFDLDQDGEINEQEFIAIMMDEA.

The segment covering 1-12 has biased composition (basic residues); the sequence is MFANARAKRRSR. The tract at residues 1-21 is disordered; it reads MFANARAKRRSRASSPTPARL. 4 EF-hand domains span residues 34–69, 70–105, 107–142, and 143–176; these read EQRQDINEAFKLFDSDKDNAIDYHELRAAMRALGFN, AEKSEVLKILRDFDKTGKGYLQMEDFVRVMTEKIVE, DPLEEIKRAFELFDDDETGKISLRNLRRVAKELNEN, and IDDQELEAMIEEFDLDQDGEINEQEFIAIMMDEA. Ca(2+) is bound by residues Asp47, Asp49, Asp51, and Glu58. Ca(2+) contacts are provided by Asp156, Asp158, Asp160, Glu162, and Glu167.

This sequence belongs to the centrin family. In terms of assembly, component of the spindle pole body (SPB), acting as the connector of microtubule arrays in the cytoplasm and the nucleoplasm, is involved in nuclear positioning before chromosome segregation, SPB separation, spindle formation, chromosome segregation, nuclear migration into the bud, nuclear reorientation after cytokinesis and nuclear fusion during conjugation. The SPB half-bridge, which is tightly associated with the cytoplasmic side of the nuclear envelope and the SPB, is playing a key role as the starting structure for and in the initiation of SPB duplication in G1. Within the complex, interacts with sad1.

Its subcellular location is the nucleus. Required for the proper coordination between exit from mitosis and the initiation of septation. Has a role in bipolar spindle formation during spindle pole body (SPB) duplication. Required for the localization of sad1 to the SPB. The chain is Cell division control protein 31 (cdc31) from Schizosaccharomyces pombe (strain 972 / ATCC 24843) (Fission yeast).